The primary structure comprises 335 residues: MKAKDIVLKKSEEIEGLAIEGPWLDEVESLEGVISYYEKIGFQATHLGKAVKIWRKVEEKRKGGEEVRVFLGYTSNIVSSGLREIIAWLVKERKVDVIVTTAGGIEEDFIKTLKPFILGDWEVNDAELREKGINRIGNIFVPNDRYIEFEKYMVPFFERILDIERKLKRPLTASEFIYEMGRYMDEVLGKEKEKSIIYWAYKRDVPIFCPAITDGSIGDMLYFFKEERHDSKLVIDIANDIVKLNNLAITAKETASIILGGSLPKHAIINANLFRGGTDYAIYISTAVPWDGSLSGAPPSEGVSWGKIKAKADYVEIWADATLVFPILVWMVMKA.

Lys-307 acts as the Nucleophile in catalysis.

Belongs to the deoxyhypusine synthase family. NAD(+) is required as a cofactor.

The catalysed reaction is [eIF5A protein]-L-lysine + spermidine = [eIF5A protein]-deoxyhypusine + propane-1,3-diamine. Its pathway is protein modification; eIF5A hypusination. Catalyzes the NAD-dependent oxidative cleavage of spermidine and the subsequent transfer of the butylamine moiety of spermidine to the epsilon-amino group of a specific lysine residue of the eIF-5A precursor protein to form the intermediate deoxyhypusine residue. This chain is Probable deoxyhypusine synthase (dys), found in Pyrococcus abyssi (strain GE5 / Orsay).